A 355-amino-acid chain; its full sequence is Peptide chain release factor 1 (355 aa).

N5-methylglutamine is present on Gln-233.

This sequence belongs to the prokaryotic/mitochondrial release factor family. Methylated by PrmC. Methylation increases the termination efficiency of RF1.

It localises to the cytoplasm. In terms of biological role, peptide chain release factor 1 directs the termination of translation in response to the peptide chain termination codons UAG and UAA. In Syntrophomonas wolfei subsp. wolfei (strain DSM 2245B / Goettingen), this protein is Peptide chain release factor 1.